A 357-amino-acid polypeptide reads, in one-letter code: Uroporphyrinogen decarboxylase (357 aa).

Substrate is bound by residues 27–31 (RQAGR), Asp-77, Tyr-154, Thr-209, and His-327.

This sequence belongs to the uroporphyrinogen decarboxylase family. In terms of assembly, homodimer.

It is found in the cytoplasm. It carries out the reaction uroporphyrinogen III + 4 H(+) = coproporphyrinogen III + 4 CO2. It participates in porphyrin-containing compound metabolism; protoporphyrin-IX biosynthesis; coproporphyrinogen-III from 5-aminolevulinate: step 4/4. Functionally, catalyzes the decarboxylation of four acetate groups of uroporphyrinogen-III to yield coproporphyrinogen-III. This is Uroporphyrinogen decarboxylase from Proteus mirabilis (strain HI4320).